A 1342-amino-acid polypeptide reads, in one-letter code: DNA-directed RNA polymerase subunit beta (1342 aa).

It belongs to the RNA polymerase beta chain family. As to quaternary structure, the RNAP catalytic core consists of 2 alpha, 1 beta, 1 beta' and 1 omega subunit. When a sigma factor is associated with the core the holoenzyme is formed, which can initiate transcription.

The catalysed reaction is RNA(n) + a ribonucleoside 5'-triphosphate = RNA(n+1) + diphosphate. In terms of biological role, DNA-dependent RNA polymerase catalyzes the transcription of DNA into RNA using the four ribonucleoside triphosphates as substrates. In Aeromonas salmonicida (strain A449), this protein is DNA-directed RNA polymerase subunit beta.